Here is a 403-residue protein sequence, read N- to C-terminus: Indoleamine 2,3-dioxygenase 1 (403 aa).

Histidine 346 is a heme b binding site. Residues 360–381 are disordered; that stretch reads QQPKENKTSEDPSKLEAKGTGG. A compositionally biased stretch (basic and acidic residues) spans 363-376; it reads KENKTSEDPSKLEA.

It belongs to the indoleamine 2,3-dioxygenase family. In terms of assembly, monomer. Heme b is required as a cofactor. As to expression, expressed in mature dendritic cells located in lymphoid organs (including lymph nodes, spleen, tonsils, Peyers's patches, the gut lamina propria, and the thymic medulla), in some epithelial cells of the female genital tract, as well as in endothelial cells of term placenta and in lung parenchyma. Weakly or not expressed in most normal tissues, but mostly inducible in most tissues. Expressed in more than 50% of tumors, either by tumoral, stromal, or endothelial cells (expression in tumor is associated with a worse clinical outcome). Not overexpressed in tumor-draining lymph nodes.

It localises to the cytoplasm. It is found in the cytosol. It catalyses the reaction D-tryptophan + O2 = N-formyl-D-kynurenine. The enzyme catalyses L-tryptophan + O2 = N-formyl-L-kynurenine. It participates in amino-acid degradation; L-tryptophan degradation via kynurenine pathway; L-kynurenine from L-tryptophan: step 1/2. With respect to regulation, activity is inhibited by and MTH-trp (methylthiohydantoin-DL-tryptophan), modestly inhibited by L-1MT (1-methyl-L-tryptophan) but not D-1MT (1-methyl-D-tryptophan). Catalyzes the first and rate limiting step of the catabolism of the essential amino acid tryptophan along the kynurenine pathway. Involved in the peripheral immune tolerance, contributing to maintain homeostasis by preventing autoimmunity or immunopathology that would result from uncontrolled and overreacting immune responses. Tryptophan shortage inhibits T lymphocytes division and accumulation of tryptophan catabolites induces T-cell apoptosis and differentiation of regulatory T-cells. Acts as a suppressor of anti-tumor immunity. Limits the growth of intracellular pathogens by depriving tryptophan. Protects the fetus from maternal immune rejection. This is Indoleamine 2,3-dioxygenase 1 from Homo sapiens (Human).